A 128-amino-acid polypeptide reads, in one-letter code: Flagellar basal body rod protein FlgB (128 aa).

It belongs to the flagella basal body rod proteins family. In terms of assembly, the basal body constitutes a major portion of the flagellar organelle and consists of a number of rings mounted on a central rod. In Gram-negative bacteria, at least four rings, L, P, S and M are present, whereas Gram-positive bacteria lack the L and P rings. The rod consists of about 26 subunits of FlgG in the distal portion, and FlgB, FlgC and FlgF build up the proximal portion of the rod with about 6 subunits each. Rod assembly occurs by export via the flagellum-specific pathway of its constituent proteins and by their incorporation into the rod structure in the probable order of FlgB, FlgC, FlgF and FlgG. Another protein, FliE, also assembles onto the stable rod structure.

The protein resides in the bacterial flagellum basal body. In terms of biological role, structural component of flagellum, the bacterial motility apparatus. Part of the rod structure of flagellar basal body. The chain is Flagellar basal body rod protein FlgB from Cereibacter sphaeroides (strain ATCC 17023 / DSM 158 / JCM 6121 / CCUG 31486 / LMG 2827 / NBRC 12203 / NCIMB 8253 / ATH 2.4.1.) (Rhodobacter sphaeroides).